We begin with the raw amino-acid sequence, 86 residues long: Large ribosomal subunit protein uL23 (86 aa).

Belongs to the universal ribosomal protein uL23 family. As to quaternary structure, part of the 50S ribosomal subunit. Contacts protein L29.

Functionally, binds to 23S rRNA. One of the proteins that surrounds the polypeptide exit tunnel on the outside of the ribosome. The chain is Large ribosomal subunit protein uL23 from Methanosphaera stadtmanae (strain ATCC 43021 / DSM 3091 / JCM 11832 / MCB-3).